The sequence spans 455 residues: Bifunctional protein GlmU (455 aa).

The pyrophosphorylase stretch occupies residues 1–225 (MNIVILAAGL…EWETLGVNSK (225 aa)). Residues 6-9 (LAAG), K20, Q71, 76-77 (GT), 98-100 (YGD), G135, E150, N165, and N223 each bind UDP-N-acetyl-alpha-D-glucosamine. D100 contributes to the Mg(2+) binding site. N223 provides a ligand contact to Mg(2+). The tract at residues 226–246 (VQLAELERIHQRNLAQQLLED) is linker. The N-acetyltransferase stretch occupies residues 247–455 (GVTLIDPARI…QRPVKQKKDA (209 aa)). UDP-N-acetyl-alpha-D-glucosamine is bound by residues R329 and K347. The active-site Proton acceptor is H359. 2 residues coordinate UDP-N-acetyl-alpha-D-glucosamine: Y362 and N373. Residues A376, 382-383 (NY), S401, A419, and R436 contribute to the acetyl-CoA site.

It in the N-terminal section; belongs to the N-acetylglucosamine-1-phosphate uridyltransferase family. In the C-terminal section; belongs to the transferase hexapeptide repeat family. In terms of assembly, homotrimer. Requires Mg(2+) as cofactor.

It localises to the cytoplasm. The catalysed reaction is alpha-D-glucosamine 1-phosphate + acetyl-CoA = N-acetyl-alpha-D-glucosamine 1-phosphate + CoA + H(+). The enzyme catalyses N-acetyl-alpha-D-glucosamine 1-phosphate + UTP + H(+) = UDP-N-acetyl-alpha-D-glucosamine + diphosphate. It participates in nucleotide-sugar biosynthesis; UDP-N-acetyl-alpha-D-glucosamine biosynthesis; N-acetyl-alpha-D-glucosamine 1-phosphate from alpha-D-glucosamine 6-phosphate (route II): step 2/2. It functions in the pathway nucleotide-sugar biosynthesis; UDP-N-acetyl-alpha-D-glucosamine biosynthesis; UDP-N-acetyl-alpha-D-glucosamine from N-acetyl-alpha-D-glucosamine 1-phosphate: step 1/1. The protein operates within bacterial outer membrane biogenesis; LPS lipid A biosynthesis. In terms of biological role, catalyzes the last two sequential reactions in the de novo biosynthetic pathway for UDP-N-acetylglucosamine (UDP-GlcNAc). The C-terminal domain catalyzes the transfer of acetyl group from acetyl coenzyme A to glucosamine-1-phosphate (GlcN-1-P) to produce N-acetylglucosamine-1-phosphate (GlcNAc-1-P), which is converted into UDP-GlcNAc by the transfer of uridine 5-monophosphate (from uridine 5-triphosphate), a reaction catalyzed by the N-terminal domain. The chain is Bifunctional protein GlmU from Ralstonia nicotianae (strain ATCC BAA-1114 / GMI1000) (Ralstonia solanacearum).